The sequence spans 332 residues: tRNA-dihydrouridine(20/20a) synthase (332 aa).

Residues 22–24 (PMM) and Q75 contribute to the FMN site. Catalysis depends on C105, which acts as the Proton donor. Residues K144, H177, 217–219 (NGG), and 239–240 (GR) each bind FMN.

It belongs to the Dus family. DusA subfamily. FMN is required as a cofactor.

The enzyme catalyses 5,6-dihydrouridine(20) in tRNA + NADP(+) = uridine(20) in tRNA + NADPH + H(+). The catalysed reaction is 5,6-dihydrouridine(20) in tRNA + NAD(+) = uridine(20) in tRNA + NADH + H(+). It carries out the reaction 5,6-dihydrouridine(20a) in tRNA + NADP(+) = uridine(20a) in tRNA + NADPH + H(+). It catalyses the reaction 5,6-dihydrouridine(20a) in tRNA + NAD(+) = uridine(20a) in tRNA + NADH + H(+). In terms of biological role, catalyzes the synthesis of 5,6-dihydrouridine (D), a modified base found in the D-loop of most tRNAs, via the reduction of the C5-C6 double bond in target uridines. Specifically modifies U20 and U20a in tRNAs. In Xylella fastidiosa (strain Temecula1 / ATCC 700964), this protein is tRNA-dihydrouridine(20/20a) synthase.